We begin with the raw amino-acid sequence, 165 residues long: Endoribonuclease YbeY (165 aa).

The Zn(2+) site is built by His-119, His-123, and His-129.

It belongs to the endoribonuclease YbeY family. Zn(2+) is required as a cofactor.

The protein localises to the cytoplasm. Its function is as follows. Single strand-specific metallo-endoribonuclease involved in late-stage 70S ribosome quality control and in maturation of the 3' terminus of the 16S rRNA. This chain is Endoribonuclease YbeY, found in Streptomyces coelicolor (strain ATCC BAA-471 / A3(2) / M145).